Reading from the N-terminus, the 228-residue chain is Prophenin-2 (228 aa).

Positions 1–29 (METQRASLCLGRWSLWLLLLALVVPSASA) are cleaved as a signal peptide. The propeptide occupies 30–146 (QALSYREAVL…FLRRPRLRRQ (117 aa)). Cystine bridges form between Cys85-Cys96 and Cys107-Cys124. 7 consecutive repeat copies span residues 148–157 (FPPPNVPGPR), 158–167 (FPPPNVPGPR), 168–177 (FPPPNFPGPR), 178–187 (FPPPNFPGPR), 188–197 (FPPPNFPGPP), 198–207 (FPPPIFPGPW), and 208–217 (FPPPPPFRPP). A 7 X 10 AA tandem repeats region spans residues 148–217 (FPPPNVPGPR…FPPPPPFRPP (70 aa)). Disordered stretches follow at residues 167 to 195 (RFPP…NFPG) and 207 to 228 (WFPP…PGRR). Pro225 bears the Proline amide mark. A propeptide spans 226-228 (GRR) (removed in mature form).

Belongs to the cathelicidin family.

It localises to the secreted. In terms of biological role, exerts antimicrobial activity. It is more effective against Gram-negative bacteria than Gram-positive bacteria. The polypeptide is Prophenin-2 (Sus scrofa (Pig)).